The sequence spans 314 residues: DNA-directed RNA polymerase subunit alpha (314 aa).

An alpha N-terminal domain (alpha-NTD) region spans residues 1–228; that stretch reads MIEIEKPKIE…EHLNIFVGLT (228 aa). Positions 246-314 are alpha C-terminal domain (alpha-CTD); it reads EKVLEMTIEE…ELGLGLRKDD (69 aa).

It belongs to the RNA polymerase alpha chain family. As to quaternary structure, homodimer. The RNAP catalytic core consists of 2 alpha, 1 beta, 1 beta' and 1 omega subunit. When a sigma factor is associated with the core the holoenzyme is formed, which can initiate transcription.

It carries out the reaction RNA(n) + a ribonucleoside 5'-triphosphate = RNA(n+1) + diphosphate. Its function is as follows. DNA-dependent RNA polymerase catalyzes the transcription of DNA into RNA using the four ribonucleoside triphosphates as substrates. This Bacillus velezensis (strain DSM 23117 / BGSC 10A6 / LMG 26770 / FZB42) (Bacillus amyloliquefaciens subsp. plantarum) protein is DNA-directed RNA polymerase subunit alpha.